Consider the following 1034-residue polypeptide: Vacuolar membrane protease (1034 aa).

Over methionine 1–threonine 11 the chain is Cytoplasmic. A helical transmembrane segment spans residues glycine 12–isoleucine 32. Residues histidine 33–leucine 418 lie on the Vacuolar side of the membrane. Residues asparagine 51 and asparagine 141 are each glycosylated (N-linked (GlcNAc...) asparagine). Residues histidine 200 and aspartate 212 each contribute to the Zn(2+) site. The Proton acceptor role is filled by glutamate 246. Glutamate 247, glutamate 272, and histidine 345 together coordinate Zn(2+). Residues phenylalanine 419–isoleucine 439 form a helical membrane-spanning segment. Over leucine 440–phenylalanine 470 the chain is Cytoplasmic. The chain crosses the membrane as a helical span at residues phenylalanine 471–isoleucine 491. Residues arginine 492–histidine 497 lie on the Vacuolar side of the membrane. A helical transmembrane segment spans residues isoleucine 498–phenylalanine 518. The Cytoplasmic portion of the chain corresponds to tryptophan 519–glycine 536. The chain crosses the membrane as a helical span at residues tyrosine 537 to alanine 557. Topologically, residues aspartate 558–proline 567 are vacuolar. A helical membrane pass occupies residues phenylalanine 568–alanine 588. The Cytoplasmic segment spans residues leucine 589–glutamine 703. A disordered region spans residues histidine 623 to isoleucine 653. The chain crosses the membrane as a helical span at residues leucine 704–serine 724. Residues alanine 725–proline 736 are Vacuolar-facing. Residues isoleucine 737–phenylalanine 757 form a helical membrane-spanning segment. Over isoleucine 758–serine 762 the chain is Cytoplasmic. Residues phenylalanine 763–alanine 783 traverse the membrane as a helical segment. At phenylalanine 784–alanine 1034 the chain is on the vacuolar side. N-linked (GlcNAc...) asparagine glycosylation is found at asparagine 805, asparagine 866, and asparagine 879.

The protein belongs to the peptidase M28 family. The cofactor is Zn(2+).

Its subcellular location is the vacuole membrane. Its function is as follows. May be involved in vacuolar sorting and osmoregulation. This is Vacuolar membrane protease from Colletotrichum graminicola (strain M1.001 / M2 / FGSC 10212) (Maize anthracnose fungus).